A 243-amino-acid polypeptide reads, in one-letter code: Homeobox protein goosecoid isoform A (243 aa).

The segment at residues 148 to 207 (KRRHRTIFTDEQLEALENLFQETKYPDVGTREQLARRVHLREEKVEVWFKNRRAKWRRQK) is a DNA-binding region (homeobox). The interval 201-243 (AKWRRQKRSSSEESENAQKWNKSSKNSAEKADEQVKSDLDSDS) is disordered. Polar residues predominate over residues 217–226 (AQKWNKSSKN). Residues 227 to 243 (SAEKADEQVKSDLDSDS) show a composition bias toward basic and acidic residues.

Belongs to the paired homeobox family. Bicoid subfamily. In terms of tissue distribution, at the start of gastrulation, it is found in a patch of cells encompassing 60 degrees of arc on the dorsal marginal zone.

Its subcellular location is the nucleus. In terms of biological role, plays a central role in executing Spemann's organizer phenomenon (the dorsal blastopore lip of the early Xenopus laevis gastrula can organize a complete secondary body axis when transplanted to another embryo). The chain is Homeobox protein goosecoid isoform A (gsc-a) from Xenopus laevis (African clawed frog).